Consider the following 436-residue polypeptide: 3-ketoacyl-CoA thiolase (436 aa).

The Acyl-thioester intermediate role is filled by Cys99. Active-site proton acceptor residues include His392 and Cys422.

Belongs to the thiolase-like superfamily. Thiolase family. Heterotetramer of two alpha chains (FadJ) and two beta chains (FadI).

It is found in the cytoplasm. The enzyme catalyses an acyl-CoA + acetyl-CoA = a 3-oxoacyl-CoA + CoA. It functions in the pathway lipid metabolism; fatty acid beta-oxidation. In terms of biological role, catalyzes the final step of fatty acid oxidation in which acetyl-CoA is released and the CoA ester of a fatty acid two carbons shorter is formed. This is 3-ketoacyl-CoA thiolase from Pseudoalteromonas atlantica (strain T6c / ATCC BAA-1087).